A 387-amino-acid chain; its full sequence is Protein REVEILLE 1 (387 aa).

Composition is skewed to polar residues over residues 1-17 (MASSPLTANVQGTNASL) and 27-37 (KQIQFNDQSFG). A disordered region spans residues 1–44 (MASSPLTANVQGTNASLRNRDEETADKQIQFNDQSFGGNDYAPK). The HTH myb-type domain occupies 50 to 104 (TITKERERWTDEEHKKFVEALKLYGRAWRRIEEHVGSKTAVQIRSHAQKFFSKVA). The H-T-H motif DNA-binding region spans 77-100 (WRRIEEHVGSKTAVQIRSHAQKFF). 3 disordered regions span residues 105–200 (REAT…TANA), 306–334 (KAVQNEGSSTGSNTGSVDDTGHTEKTTEP), and 350–387 (AFSELRRTNSESNSRGFGPYKKRKMVTEEEEHEIHLHL). Basic residues predominate over residues 124 to 134 (RPKRKPAHPYP). Over residues 141-166 (ADQTSRSVSPSERDTQSPTSVLSTVG) the composition is skewed to polar residues. Low complexity-rich tracts occupy residues 172–200 (SLDSSSPNRSLSPVSSASPPAALTTTANA) and 312–323 (GSSTGSNTGSVD). Positions 324 to 333 (DTGHTEKTTE) are enriched in basic and acidic residues.

It is found in the nucleus. In terms of biological role, morning-phased transcription factor integrating the circadian clock and auxin pathways. Binds to the evening element (EE) of promoters. Does not act within the central clock, but regulates free auxin levels in a time-of-day specific manner. Positively regulates the expression of YUC8 during the day, but has no effect during the night. Negative regulator of freezing tolerance. The sequence is that of Protein REVEILLE 1 (RVE1) from Arabidopsis thaliana (Mouse-ear cress).